The chain runs to 249 residues: MKITLVGNGRMGRQIADVVAASGAHVVNRVLDVNDTIDAAAFSGSDVIIDFTVRSAFLANYPALIASGVPVVVGTTGWDDVMPQVREEVVKARSTMLYSANYSLGVNIFFRTLREAARLIAPFEQFDIALSEQHHTGKADFPSGTAIKAADEILNSNPRKRTIVRELQEGRKLQSDELQVASIRLGSVFGVHSAIIDSESDTIELTHTAKNRTGFASGAVRAAEWLVQRHATSPGFYTMDDFLNDLFSA.

NAD(+) is bound by residues aspartate 32, 74-76 (GTT), and 99-102 (SANY). The Proton donor/acceptor role is filled by histidine 134. Histidine 135 is a (S)-2,3,4,5-tetrahydrodipicolinate binding site. Catalysis depends on lysine 138, which acts as the Proton donor. 144–145 (GT) is a (S)-2,3,4,5-tetrahydrodipicolinate binding site.

This sequence belongs to the DapB family.

The protein localises to the cytoplasm. It catalyses the reaction (S)-2,3,4,5-tetrahydrodipicolinate + NAD(+) + H2O = (2S,4S)-4-hydroxy-2,3,4,5-tetrahydrodipicolinate + NADH + H(+). The catalysed reaction is (S)-2,3,4,5-tetrahydrodipicolinate + NADP(+) + H2O = (2S,4S)-4-hydroxy-2,3,4,5-tetrahydrodipicolinate + NADPH + H(+). The protein operates within amino-acid biosynthesis; L-lysine biosynthesis via DAP pathway; (S)-tetrahydrodipicolinate from L-aspartate: step 4/4. Its function is as follows. Catalyzes the conversion of 4-hydroxy-tetrahydrodipicolinate (HTPA) to tetrahydrodipicolinate. The chain is 4-hydroxy-tetrahydrodipicolinate reductase from Chlorobaculum tepidum (strain ATCC 49652 / DSM 12025 / NBRC 103806 / TLS) (Chlorobium tepidum).